A 344-amino-acid polypeptide reads, in one-letter code: Putative [LysW]-lysine/[LysW]-ornithine hydrolase (344 aa).

Zn(2+) is bound at residue H66. Residue D68 is part of the active site. D90 serves as a coordination point for Zn(2+). E117 (proton acceptor) is an active-site residue. Residues E118, E139, and H297 each contribute to the Zn(2+) site.

This sequence belongs to the peptidase M20A family. LysK subfamily. Zn(2+) is required as a cofactor. It depends on Co(2+) as a cofactor.

It is found in the cytoplasm. It carries out the reaction [amino-group carrier protein]-C-terminal-gamma-(L-lysyl)-L-glutamate + H2O = [amino-group carrier protein]-C-terminal-L-glutamate + L-lysine. It catalyses the reaction [amino-group carrier protein]-C-terminal-gamma-(L-ornithyl)-L-glutamate + H2O = [amino-group carrier protein]-C-terminal-L-glutamate + L-ornithine. Its pathway is amino-acid biosynthesis; L-lysine biosynthesis via AAA pathway; L-lysine from L-alpha-aminoadipate (Thermus route): step 5/5. The protein operates within amino-acid biosynthesis; L-arginine biosynthesis. Functionally, catalyzes the release of L-lysine from [LysW]-gamma-L-lysine and the release of L-ornithine from [LysW]-L-ornithine. This Thermococcus kodakarensis (strain ATCC BAA-918 / JCM 12380 / KOD1) (Pyrococcus kodakaraensis (strain KOD1)) protein is Putative [LysW]-lysine/[LysW]-ornithine hydrolase.